A 111-amino-acid polypeptide reads, in one-letter code: Ribosome-binding factor A (111 aa).

The protein belongs to the RbfA family. As to quaternary structure, monomer. Binds 30S ribosomal subunits, but not 50S ribosomal subunits or 70S ribosomes.

The protein localises to the cytoplasm. In terms of biological role, one of several proteins that assist in the late maturation steps of the functional core of the 30S ribosomal subunit. Associates with free 30S ribosomal subunits (but not with 30S subunits that are part of 70S ribosomes or polysomes). Required for efficient processing of 16S rRNA. May interact with the 5'-terminal helix region of 16S rRNA. In Helicobacter pylori (strain J99 / ATCC 700824) (Campylobacter pylori J99), this protein is Ribosome-binding factor A.